Consider the following 334-residue polypeptide: GTPase Obg (334 aa).

In terms of domain architecture, Obg spans 1 to 159 (MRFVDEVVIK…KEVRLELNLL (159 aa)). The region spanning 160 to 331 (ADVALLGLPN…LAKKLNEFLQ (172 aa)) is the OBG-type G domain. Residues 166 to 173 (GLPNAGKS), 191 to 195 (FTTMY), 212 to 215 (DIPG), 282 to 285 (NKID), and 312 to 314 (SAA) each bind GTP. Residues Ser173 and Thr193 each contribute to the Mg(2+) site.

It belongs to the TRAFAC class OBG-HflX-like GTPase superfamily. OBG GTPase family. In terms of assembly, monomer. Requires Mg(2+) as cofactor.

It localises to the cytoplasm. Its function is as follows. An essential GTPase which binds GTP, GDP and possibly (p)ppGpp with moderate affinity, with high nucleotide exchange rates and a fairly low GTP hydrolysis rate. Plays a role in control of the cell cycle, stress response, ribosome biogenesis and in those bacteria that undergo differentiation, in morphogenesis control. This Francisella tularensis subsp. holarctica (strain FTNF002-00 / FTA) protein is GTPase Obg.